We begin with the raw amino-acid sequence, 72 residues long: Large ribosomal subunit protein bL28 (72 aa).

The protein belongs to the bacterial ribosomal protein bL28 family.

This Chlorobium phaeovibrioides (strain DSM 265 / 1930) (Prosthecochloris vibrioformis (strain DSM 265)) protein is Large ribosomal subunit protein bL28.